Reading from the N-terminus, the 108-residue chain is Putative pterin-4-alpha-carbinolamine dehydratase (108 aa).

The protein belongs to the pterin-4-alpha-carbinolamine dehydratase family.

It carries out the reaction (4aS,6R)-4a-hydroxy-L-erythro-5,6,7,8-tetrahydrobiopterin = (6R)-L-erythro-6,7-dihydrobiopterin + H2O. The sequence is that of Putative pterin-4-alpha-carbinolamine dehydratase from Chromobacterium violaceum (strain ATCC 12472 / DSM 30191 / JCM 1249 / CCUG 213 / NBRC 12614 / NCIMB 9131 / NCTC 9757 / MK).